The following is a 388-amino-acid chain: Na(+)/H(+) antiporter NhaA (388 aa).

Topologically, residues 1–11 (MKHLHRFFSSD) are cytoplasmic. A helical membrane pass occupies residues 12-31 (ASGGIILIIAAVLAMIMANS). Over 32 to 58 (GATSGWYHDFLETPVQLRVGTLEINKN) the chain is Periplasmic. The chain crosses the membrane as a helical span at residues 59 to 80 (MLLWINDALMAVFFLLVGLEVK). Over 81-96 (RELMQGSLASLRQAAF) the chain is Cytoplasmic. A helical membrane pass occupies residues 97–116 (PVIAAIGGMIVPALLYLAFN). Over 117 to 122 (YADPIT) the chain is Periplasmic. Residues 123–130 (REGWAIPA) form a helical membrane-spanning segment. Residues 131-154 (ATDIAFALGVLALLGSRVPLALKI) lie on the Cytoplasmic side of the membrane. A helical transmembrane segment spans residues 155 to 176 (FLMALAIIDDLGAIIIIALFYT). Over 177–180 (NDLS) the chain is Periplasmic. The helical transmembrane segment at 181 to 200 (MASLGVAAVAIAVLAVLNLC) threads the bilayer. The Cytoplasmic segment spans residues 201 to 204 (GVRR). Residues 205–222 (TGVYILVGVVLWTAVLKS) form a helical membrane-spanning segment. A topological domain (periplasmic) is located at residue G223. Residues 224-236 (VHATLAGVIVGFF) form a helical membrane-spanning segment. Topologically, residues 237-253 (IPLKEKHGRSPAKRLEH) are cytoplasmic. Residues 254–272 (VLHPWVAYLILPLFAFANA) form a helical membrane-spanning segment. The Periplasmic portion of the chain corresponds to 273–286 (GVSLQGVTLEGLTS). The chain crosses the membrane as a helical span at residues 287-310 (ILPLGIIAGLLIGKPLGISLFCWL). Topologically, residues 311–339 (ALRLKLAHLPEGTTYQQIMAVGILCGIGF) are cytoplasmic. Residues 340–350 (TMSIFIASLAF) traverse the membrane as a helical segment. The Periplasmic portion of the chain corresponds to 351–357 (GSVDPEL). Residues 358-380 (INWAKLGILVGSISSAVIGYSWL) form a helical membrane-spanning segment. Residues 381–388 (RVRLRPSV) are Cytoplasmic-facing.

This sequence belongs to the NhaA Na(+)/H(+) (TC 2.A.33) antiporter family.

It localises to the cell inner membrane. The catalysed reaction is Na(+)(in) + 2 H(+)(out) = Na(+)(out) + 2 H(+)(in). Functionally, na(+)/H(+) antiporter that extrudes sodium in exchange for external protons. The sequence is that of Na(+)/H(+) antiporter NhaA from Escherichia coli O6:K15:H31 (strain 536 / UPEC).